The primary structure comprises 731 residues: Inducible ornithine decarboxylase (731 aa).

The residue at position 356 (Lys-356) is an N6-(pyridoxal phosphate)lysine.

It belongs to the Orn/Lys/Arg decarboxylase class-I family. In terms of assembly, dodecamer. The cofactor is pyridoxal 5'-phosphate.

The catalysed reaction is L-ornithine + H(+) = putrescine + CO2. This Lactobacillus sp. (strain 30a) protein is Inducible ornithine decarboxylase (odcI).